The primary structure comprises 562 residues: Glucose-6-phosphate isomerase (562 aa).

E370 functions as the Proton donor in the catalytic mechanism. Catalysis depends on residues H401 and K526.

The protein belongs to the GPI family.

The protein localises to the cytoplasm. The enzyme catalyses alpha-D-glucose 6-phosphate = beta-D-fructose 6-phosphate. It participates in carbohydrate biosynthesis; gluconeogenesis. It functions in the pathway carbohydrate degradation; glycolysis; D-glyceraldehyde 3-phosphate and glycerone phosphate from D-glucose: step 2/4. In terms of biological role, catalyzes the reversible isomerization of glucose-6-phosphate to fructose-6-phosphate. The sequence is that of Glucose-6-phosphate isomerase from Deinococcus geothermalis (strain DSM 11300 / CIP 105573 / AG-3a).